The chain runs to 259 residues: Protein unc-50 homolog (259 aa).

An N-acetylmethionine modification is found at Met-1. At 1–82 the chain is on the cytoplasmic side; that stretch reads MLPSTSLSSS…TKDQWARDDP (82 aa). Ser-6 carries the post-translational modification Phosphoserine. A helical transmembrane segment spans residues 83–103; it reads AFLVLLSIWLCVSTIGFGFVL. The Lumenal segment spans residues 104–112; the sequence is DMGFFETIK. Residues 113–133 form a helical membrane-spanning segment; that stretch reads LLLWVVFIDCVGVGLLISTLM. Residues 134–163 are Cytoplasmic-facing; that stretch reads WFVSNKYLVKRQSRDYDVEWGYAFDVHLNA. A helical membrane pass occupies residues 164–184; that stretch reads FYPLLVILHFIQLFFINHVIL. Residues 185 to 187 lie on the Lumenal side of the membrane; it reads TDT. Residues 188-208 traverse the membrane as a helical segment; sequence FIGYLVGNTLWLIAVGYYIYV. The Cytoplasmic portion of the chain corresponds to 209 to 222; it reads TFLGYSALPFLKNT. A helical membrane pass occupies residues 223 to 243; sequence VILLYPFAPLMVLYGLSLALG. Residues 244-259 are Lumenal-facing; the sequence is WNFTHTLCSFYKYRVK.

It belongs to the unc-50 family. In terms of tissue distribution, highly expressed in periodontal ligament and bone marrow, but not in gingival fibroblasts.

Its subcellular location is the nucleus inner membrane. It is found in the golgi apparatus membrane. Its function is as follows. Involved in the cell surface expression of neuronal nicotinic receptors. Binds RNA. In Mus musculus (Mouse), this protein is Protein unc-50 homolog (Unc50).